Here is a 180-residue protein sequence, read N- to C-terminus: ATP synthase subunit delta (180 aa).

This sequence belongs to the ATPase delta chain family. F-type ATPases have 2 components, F(1) - the catalytic core - and F(0) - the membrane proton channel. F(1) has five subunits: alpha(3), beta(3), gamma(1), delta(1), epsilon(1). F(0) has three main subunits: a(1), b(2) and c(10-14). The alpha and beta chains form an alternating ring which encloses part of the gamma chain. F(1) is attached to F(0) by a central stalk formed by the gamma and epsilon chains, while a peripheral stalk is formed by the delta and b chains.

It is found in the cell membrane. Functionally, f(1)F(0) ATP synthase produces ATP from ADP in the presence of a proton or sodium gradient. F-type ATPases consist of two structural domains, F(1) containing the extramembraneous catalytic core and F(0) containing the membrane proton channel, linked together by a central stalk and a peripheral stalk. During catalysis, ATP synthesis in the catalytic domain of F(1) is coupled via a rotary mechanism of the central stalk subunits to proton translocation. In terms of biological role, this protein is part of the stalk that links CF(0) to CF(1). It either transmits conformational changes from CF(0) to CF(1) or is implicated in proton conduction. This chain is ATP synthase subunit delta, found in Lactobacillus delbrueckii subsp. bulgaricus (strain ATCC 11842 / DSM 20081 / BCRC 10696 / JCM 1002 / NBRC 13953 / NCIMB 11778 / NCTC 12712 / WDCM 00102 / Lb 14).